Consider the following 255-residue polypeptide: tRNA (guanine-N(1)-)-methyltransferase (255 aa).

S-adenosyl-L-methionine is bound by residues Gly-117 and 137 to 142 (LGDFVL).

The protein belongs to the RNA methyltransferase TrmD family. As to quaternary structure, homodimer.

It is found in the cytoplasm. The catalysed reaction is guanosine(37) in tRNA + S-adenosyl-L-methionine = N(1)-methylguanosine(37) in tRNA + S-adenosyl-L-homocysteine + H(+). Specifically methylates guanosine-37 in various tRNAs. The chain is tRNA (guanine-N(1)-)-methyltransferase from Paracidovorax citrulli (strain AAC00-1) (Acidovorax citrulli).